Reading from the N-terminus, the 148-residue chain is Sec-independent protein translocase protein TatB (148 aa).

A helical membrane pass occupies residues 1–21 (MFGISFSELLLVGLVALLVLG). The disordered stretch occupies residues 85–148 (EPTPVEHVGE…NDTTQPPRAP (64 aa)). The span at 107–148 (APAVAPTESAPVVAPASVEHVAQTAAPTTPAPNDTTQPPRAP) shows a compositional bias: low complexity.

The protein belongs to the TatB family. The Tat system comprises two distinct complexes: a TatABC complex, containing multiple copies of TatA, TatB and TatC subunits, and a separate TatA complex, containing only TatA subunits. Substrates initially bind to the TatABC complex, which probably triggers association of the separate TatA complex to form the active translocon.

The protein resides in the cell inner membrane. Its function is as follows. Part of the twin-arginine translocation (Tat) system that transports large folded proteins containing a characteristic twin-arginine motif in their signal peptide across membranes. Together with TatC, TatB is part of a receptor directly interacting with Tat signal peptides. TatB may form an oligomeric binding site that transiently accommodates folded Tat precursor proteins before their translocation. The chain is Sec-independent protein translocase protein TatB from Pseudomonas fluorescens (strain Pf0-1).